A 291-amino-acid chain; its full sequence is N-acetylmannosamine kinase (291 aa).

Residues A5 to K12 and G132 to C139 contribute to the ATP site. Residues H156, C166, C168, and C173 each contribute to the Zn(2+) site.

Belongs to the ROK (NagC/XylR) family. NanK subfamily. Homodimer.

The enzyme catalyses an N-acyl-D-mannosamine + ATP = an N-acyl-D-mannosamine 6-phosphate + ADP + H(+). It participates in amino-sugar metabolism; N-acetylneuraminate degradation; D-fructose 6-phosphate from N-acetylneuraminate: step 2/5. Its function is as follows. Catalyzes the phosphorylation of N-acetylmannosamine (ManNAc) to ManNAc-6-P. The protein is N-acetylmannosamine kinase of Salmonella agona (strain SL483).